The primary structure comprises 270 residues: Phosphatidylglycerol--prolipoprotein diacylglyceryl transferase (270 aa).

4 consecutive transmembrane segments (helical) span residues 19–39 (FPVYWYGIIIGTGVLLGLWLA), 56–76 (LVLIAVPIAILFARMYYVIFE), 92–112 (QGGLAIHGGLIGAVITGILFA), and 116–136 (GVSFWKLADIAAPSILLGQAI). Residue R138 participates in a 1,2-diacyl-sn-glycero-3-phospho-(1'-sn-glycerol) binding. A run of 3 helical transmembrane segments spans residues 178–198 (HPTFLYESLWNFVGVILLLAL), 206–226 (GELFFTYLIWYSVGRFFVEGL), and 236–256 (LRIAQVMSIGLVVISIIFIIV).

Belongs to the Lgt family.

Its subcellular location is the cell membrane. It carries out the reaction L-cysteinyl-[prolipoprotein] + a 1,2-diacyl-sn-glycero-3-phospho-(1'-sn-glycerol) = an S-1,2-diacyl-sn-glyceryl-L-cysteinyl-[prolipoprotein] + sn-glycerol 1-phosphate + H(+). It participates in protein modification; lipoprotein biosynthesis (diacylglyceryl transfer). Functionally, catalyzes the transfer of the diacylglyceryl group from phosphatidylglycerol to the sulfhydryl group of the N-terminal cysteine of a prolipoprotein, the first step in the formation of mature lipoproteins. The polypeptide is Phosphatidylglycerol--prolipoprotein diacylglyceryl transferase (Bacillus cereus (strain G9842)).